Consider the following 339-residue polypeptide: tRNA N6-adenosine threonylcarbamoyltransferase (339 aa).

2 residues coordinate Fe cation: His107 and His111. Substrate-binding positions include 129–133 (LVSGG), Asp162, Gly175, and Asn279. A Fe cation-binding site is contributed by Asp307.

Belongs to the KAE1 / TsaD family. Requires Fe(2+) as cofactor.

It is found in the cytoplasm. The enzyme catalyses L-threonylcarbamoyladenylate + adenosine(37) in tRNA = N(6)-L-threonylcarbamoyladenosine(37) in tRNA + AMP + H(+). Required for the formation of a threonylcarbamoyl group on adenosine at position 37 (t(6)A37) in tRNAs that read codons beginning with adenine. Is involved in the transfer of the threonylcarbamoyl moiety of threonylcarbamoyl-AMP (TC-AMP) to the N6 group of A37, together with TsaE and TsaB. TsaD likely plays a direct catalytic role in this reaction. The chain is tRNA N6-adenosine threonylcarbamoyltransferase from Campylobacter curvus (strain 525.92).